The following is a 241-amino-acid chain: Probable transcriptional regulatory protein str0195 (241 aa).

Belongs to the TACO1 family. YeeN subfamily.

The protein localises to the cytoplasm. The polypeptide is Probable transcriptional regulatory protein str0195 (Streptococcus thermophilus (strain CNRZ 1066)).